Reading from the N-terminus, the 522-residue chain is Glucans biosynthesis protein G (522 aa).

Residues methionine 1–alanine 33 form the signal peptide.

This sequence belongs to the OpgD/OpgG family.

Its subcellular location is the periplasm. The protein operates within glycan metabolism; osmoregulated periplasmic glucan (OPG) biosynthesis. In terms of biological role, involved in the biosynthesis of osmoregulated periplasmic glucans (OPGs). In Pectobacterium atrosepticum (strain SCRI 1043 / ATCC BAA-672) (Erwinia carotovora subsp. atroseptica), this protein is Glucans biosynthesis protein G.